Reading from the N-terminus, the 713-residue chain is Polyribonucleotide nucleotidyltransferase (713 aa).

Mg(2+) is bound by residues D494 and D500. Residues 561–623 enclose the KH domain; it reads PSFSTMTIPK…EAVQSAEKRV (63 aa). The S1 motif domain occupies 633–702; the sequence is GDVYQGTVKS…KSGKYKLSRK (70 aa).

Belongs to the polyribonucleotide nucleotidyltransferase family. It depends on Mg(2+) as a cofactor.

It localises to the cytoplasm. The catalysed reaction is RNA(n+1) + phosphate = RNA(n) + a ribonucleoside 5'-diphosphate. In terms of biological role, involved in mRNA degradation. Catalyzes the phosphorolysis of single-stranded polyribonucleotides processively in the 3'- to 5'-direction. The protein is Polyribonucleotide nucleotidyltransferase of Amoebophilus asiaticus (strain 5a2).